The sequence spans 271 residues: Chymotrypsin-like elastase family member 2A (271 aa).

Positions 1–16 (MIRTLLLSALVAGALS) are cleaved as a signal peptide. Positions 17-30 (CGYPTYEVEDDVSR) are cleaved as a propeptide — activation peptide. The 239-residue stretch at 31–269 (VVGGQEATPN…YIDWINSVMA (239 aa)) folds into the Peptidase S1 domain. A disulfide bridge links C60 with C76. Residues H75 and D123 each act as charge relay system in the active site. 3 cysteine pairs are disulfide-bonded: C157-C224, C188-C204, and C214-C245. The active-site Charge relay system is S218.

The protein belongs to the peptidase S1 family. Elastase subfamily. Interacts with CPA1. Interacts with SERPINA1. In terms of tissue distribution, highly expressed in pancreas (at mRNA and protein levels). Also expressed in adrenal gland and small intestine.

The protein resides in the secreted. It carries out the reaction Preferential cleavage: Leu-|-Xaa, Met-|-Xaa and Phe-|-Xaa. Hydrolyzes elastin.. Functionally, elastase that enhances insulin signaling and might have a physiologic role in cellular glucose metabolism. Circulates in plasma and reduces platelet hyperactivation, triggers both insulin secretion and degradation, and increases insulin sensitivity. In Mus musculus (Mouse), this protein is Chymotrypsin-like elastase family member 2A.